Consider the following 44-residue polypeptide: Antibacterial protein 2 homolog (44 aa).

The protein belongs to the staphylococcal hemolytic protein family.

Its subcellular location is the secreted. Has hemolytic activity and also inhibits the growth of gonococci. This Staphylococcus haemolyticus (strain JCSC1435) protein is Antibacterial protein 2 homolog.